Here is a 151-residue protein sequence, read N- to C-terminus: Protein A151R (151 aa).

Zn(2+) is bound by residues His102, Cys109, Cys132, and Cys135. The short motif at 131 to 135 is the Thioredoxin WCTKC motif element; the sequence is WCTKC.

Belongs to the asfivirus A151R family. As to quaternary structure, monomer. Homodimer. Interacts with protein B119L. Interacts with membrane protein E248R. Zn(2+) serves as cofactor.

Its function is as follows. May participate in a redox cascade for the formation of disulfide bonds in viral proteins. The protein is Protein A151R of African swine fever virus (strain Badajoz 1971 Vero-adapted) (Ba71V).